The sequence spans 449 residues: MDVLGWLLLPLLLLCTQPHHGARAMNDIGDYVGSNLEISWLPNLDGLMEGYARNFRPGIGGPPVNVALALEVASIDHISEANMEYTMTVFLHQSWRDSRLSYNHTNETLGLDSRFVDKLWLPDTFIVNAKSAWFHDVTVENKLIRLQPDGVILYSIRITSTVACDMDLAKYPMDEQECMLDLESYGYSSEDIVYYWSENQEQIHGLDRLQLAQFTITSYRFTTELMNFKSAGQFPRLSLHFQLRRNRGVYIIQSYMPSVLLVAMSWVSFWISQAAVPARVSLGITTVLTMTTLMVSARSSLPRASAIKALDVYFWICYVFVFAALVEYAFAHFNADYRKKRKAKVKVTKPRAEMDVRNAIVLFSLSAAGVSQELAISRRQGRVPGNLMGSYRSVEVEAKKEGGSRPGGPGGIRSRLKPIDADTIDIYARAVFPAAFAAVNIIYWAAYTM.

An N-terminal signal peptide occupies residues 1 to 24 (MDVLGWLLLPLLLLCTQPHHGARA). The Extracellular segment spans residues 25–251 (MNDIGDYVGS…QLRRNRGVYI (227 aa)). Asn-103 and Asn-106 each carry an N-linked (GlcNAc...) asparagine glycan. Residues Cys-164 and Cys-178 are joined by a disulfide bond. A helical transmembrane segment spans residues 252–271 (IQSYMPSVLLVAMSWVSFWI). Residues 272–275 (SQAA) are Cytoplasmic-facing. A helical transmembrane segment spans residues 276-298 (VPARVSLGITTVLTMTTLMVSAR). Over 299–308 (SSLPRASAIK) the chain is Extracellular. A helical membrane pass occupies residues 309–331 (ALDVYFWICYVFVFAALVEYAFA). Topologically, residues 332–423 (HFNADYRKKR…SRLKPIDADT (92 aa)) are cytoplasmic. Position 390 is a phosphoserine (Ser-390). Residues 424-446 (IDIYARAVFPAAFAAVNIIYWAA) traverse the membrane as a helical segment. Residues 447 to 449 (YTM) lie on the Extracellular side of the membrane.

Belongs to the ligand-gated ion channel (TC 1.A.9) family. Gamma-aminobutyric acid receptor (TC 1.A.9.5) subfamily. GABRD sub-subfamily. As to quaternary structure, heteropentamer, formed by a combination of alpha (GABRA1-6), beta (GABRB1-3), gamma (GABRG1-3), delta (GABRD), epsilon (GABRE), rho (GABRR1-3), pi (GABRP) and theta (GABRQ) chains, each subunit exhibiting distinct physiological and pharmacological properties. As to expression, found in the brain, in cerebellar granule cells. Expressed in lungs, in alveolar epithelium.

The protein localises to the cell membrane. The enzyme catalyses chloride(in) = chloride(out). Its function is as follows. Delta subunit of the heteropentameric ligand-gated chloride channel gated by gamma-aminobutyric acid (GABA), a major inhibitory neurotransmitter in the brain. GABA-gated chloride channels, also named GABA(A) receptors (GABAAR), consist of five subunits arranged around a central pore and contain GABA active binding site(s) located at the alpha and beta subunit interface(s). When activated by GABA, GABAARs selectively allow the flow of chloride anions across the cell membrane down their electrochemical gradient. GABAARs containing delta/GABRD subunits are predominantly expressed and located in extrasynaptic or perisynaptic positions on hippocampus and cerebellar granule cells, and contribute to the tonic GABAergic inhibition. GABAAR containing alpha-4-beta-3-delta subunits can simultaneously bind GABA and histamine where histamine binds at the interface of two neighboring beta subunits, which may be involved in the regulation of sleep and wakefulness. The chain is Gamma-aminobutyric acid receptor subunit delta from Rattus norvegicus (Rat).